Here is a 177-residue protein sequence, read N- to C-terminus: Transcription termination/antitermination protein NusG (177 aa).

Residues 126–156 (PGETVRVIDGPFADFNGVVEEVNYEKSRIQV) enclose the KOW domain.

This sequence belongs to the NusG family.

Functionally, participates in transcription elongation, termination and antitermination. This Pseudomonas aeruginosa (strain ATCC 15692 / DSM 22644 / CIP 104116 / JCM 14847 / LMG 12228 / 1C / PRS 101 / PAO1) protein is Transcription termination/antitermination protein NusG.